A 284-amino-acid chain; its full sequence is Putative ABC transporter ATP-binding protein tll2439 (284 aa).

The ABC transporter domain occupies 6 to 242; it reads LEFHQVGFRY…WPTFAPELGT (237 aa). 40-47 provides a ligand contact to ATP; it reads GLNGSGKS.

It belongs to the ABC transporter superfamily.

The protein resides in the cell inner membrane. In terms of biological role, probably part of an ABC transporter complex. Responsible for energy coupling to the transport system. The polypeptide is Putative ABC transporter ATP-binding protein tll2439 (Thermosynechococcus vestitus (strain NIES-2133 / IAM M-273 / BP-1)).